A 361-amino-acid polypeptide reads, in one-letter code: Chorismate synthase (361 aa).

NADP(+)-binding residues include Arg48 and Arg54. Residues 125-127 (RSS), 238-239 (NA), Gly278, 293-297 (KPTSS), and Arg319 each bind FMN.

Belongs to the chorismate synthase family. As to quaternary structure, homotetramer. FMNH2 serves as cofactor.

The catalysed reaction is 5-O-(1-carboxyvinyl)-3-phosphoshikimate = chorismate + phosphate. Its pathway is metabolic intermediate biosynthesis; chorismate biosynthesis; chorismate from D-erythrose 4-phosphate and phosphoenolpyruvate: step 7/7. In terms of biological role, catalyzes the anti-1,4-elimination of the C-3 phosphate and the C-6 proR hydrogen from 5-enolpyruvylshikimate-3-phosphate (EPSP) to yield chorismate, which is the branch point compound that serves as the starting substrate for the three terminal pathways of aromatic amino acid biosynthesis. This reaction introduces a second double bond into the aromatic ring system. This is Chorismate synthase from Salmonella arizonae (strain ATCC BAA-731 / CDC346-86 / RSK2980).